A 191-amino-acid polypeptide reads, in one-letter code: Ribonuclease HII (191 aa).

The region spanning 4–191 is the RNase H type-2 domain; sequence YTAAGLDEVG…HRKTFLSKIQ (188 aa). A divalent metal cation contacts are provided by aspartate 10, glutamate 11, and aspartate 106.

The protein belongs to the RNase HII family. The cofactor is Mn(2+). Requires Mg(2+) as cofactor.

It localises to the cytoplasm. The enzyme catalyses Endonucleolytic cleavage to 5'-phosphomonoester.. In terms of biological role, endonuclease that specifically degrades the RNA of RNA-DNA hybrids. The chain is Ribonuclease HII from Prochlorococcus marinus (strain SARG / CCMP1375 / SS120).